The primary structure comprises 110 residues: Protein RALF-like 4 (110 aa).

The N-terminal stretch at 1 to 23 (MGVKMLLIFGLLILAMVAKSVNA) is a signal peptide. Positions 24–58 (TYPLTKSCINGQGCIGEDDELESLMDSETNRRQLA) are cleaved as a propeptide — removed in mature form. 2 disulfides stabilise this stretch: Cys76–Cys86 and Cys99–Cys105.

It belongs to the plant rapid alkalinization factor (RALF) family. In terms of processing, proteolytically cleaved, probably by S1P, a subtilisin-like serine protease (subtilase).

It is found in the secreted. In terms of biological role, cell signaling peptide that may regulate plant stress, growth, and development. Mediates a rapid alkalinization of extracellular space by mediating a transient increase in the cytoplasmic Ca(2+) concentration leading to a calcium-dependent signaling events through a cell surface receptor and a concomitant activation of some intracellular mitogen-activated protein kinases. This is Protein RALF-like 4 (RALFL4) from Arabidopsis thaliana (Mouse-ear cress).